The chain runs to 262 residues: UPF0758 protein BTH_I0781 (262 aa).

The tract at residues 1–45 (MQYEIVSAGENVGDEPERERPVAQAAAAPGIPRPAALPAAGAARR) is disordered. Residues 22–43 (VAQAAAAPGIPRPAALPAAGAA) are compositionally biased toward low complexity. One can recognise an MPN domain in the interval 140 to 262 (LVDSPGAVDD…TFSFAQAGWI (123 aa)). Zn(2+) contacts are provided by H211, H213, and D224. Residues 211 to 224 (HNHPSGAVRPSAAD) carry the JAMM motif motif.

It belongs to the UPF0758 family.

In Burkholderia thailandensis (strain ATCC 700388 / DSM 13276 / CCUG 48851 / CIP 106301 / E264), this protein is UPF0758 protein BTH_I0781.